The sequence spans 320 residues: GTP 3',8-cyclase (320 aa).

Positions 5-225 (QFGRKINYLR…IQLIKKDEKA (221 aa)) constitute a Radical SAM core domain. R14 contacts GTP. Positions 21 and 25 each coordinate [4Fe-4S] cluster. Y27 is a binding site for S-adenosyl-L-methionine. C28 contacts [4Fe-4S] cluster. Residue R64 coordinates GTP. S-adenosyl-L-methionine is bound at residue G68. T95 contacts GTP. S119 lines the S-adenosyl-L-methionine pocket. K155 contacts GTP. M189 serves as a coordination point for S-adenosyl-L-methionine. Positions 248 and 251 each coordinate [4Fe-4S] cluster. GTP is bound at residue 253-255 (RIR). C265 serves as a coordination point for [4Fe-4S] cluster.

It belongs to the radical SAM superfamily. MoaA family. Monomer and homodimer. Requires [4Fe-4S] cluster as cofactor.

The enzyme catalyses GTP + AH2 + S-adenosyl-L-methionine = (8S)-3',8-cyclo-7,8-dihydroguanosine 5'-triphosphate + 5'-deoxyadenosine + L-methionine + A + H(+). The protein operates within cofactor biosynthesis; molybdopterin biosynthesis. Catalyzes the cyclization of GTP to (8S)-3',8-cyclo-7,8-dihydroguanosine 5'-triphosphate. The chain is GTP 3',8-cyclase from Campylobacter jejuni subsp. jejuni serotype O:6 (strain 81116 / NCTC 11828).